Consider the following 72-residue polypeptide: uncharacterized protein (72 aa).

The protein localises to the host cytoplasm. This is an uncharacterized protein from Enterobacteriaceae (Bacteriophage Mu).